A 155-amino-acid chain; its full sequence is SsrA-binding protein (155 aa).

Belongs to the SmpB family.

The protein localises to the cytoplasm. Functionally, required for rescue of stalled ribosomes mediated by trans-translation. Binds to transfer-messenger RNA (tmRNA), required for stable association of tmRNA with ribosomes. tmRNA and SmpB together mimic tRNA shape, replacing the anticodon stem-loop with SmpB. tmRNA is encoded by the ssrA gene; the 2 termini fold to resemble tRNA(Ala) and it encodes a 'tag peptide', a short internal open reading frame. During trans-translation Ala-aminoacylated tmRNA acts like a tRNA, entering the A-site of stalled ribosomes, displacing the stalled mRNA. The ribosome then switches to translate the ORF on the tmRNA; the nascent peptide is terminated with the 'tag peptide' encoded by the tmRNA and targeted for degradation. The ribosome is freed to recommence translation, which seems to be the essential function of trans-translation. The protein is SsrA-binding protein of Bordetella parapertussis (strain 12822 / ATCC BAA-587 / NCTC 13253).